The sequence spans 802 residues: Leucine--tRNA ligase (802 aa).

The 'HIGH' region motif lies at 40 to 51 (PYPSGAGLHVGH). A 'KMSKS' region motif is present at residues 576–580 (KMSKS). K579 serves as a coordination point for ATP.

This sequence belongs to the class-I aminoacyl-tRNA synthetase family.

It is found in the cytoplasm. The catalysed reaction is tRNA(Leu) + L-leucine + ATP = L-leucyl-tRNA(Leu) + AMP + diphosphate. The protein is Leucine--tRNA ligase of Bacillus mycoides (strain KBAB4) (Bacillus weihenstephanensis).